The primary structure comprises 714 residues: FERM domain-containing protein 7 (714 aa).

The FERM domain maps to 2 to 282 (LHLKVQFLDD…EYHAFFRLSE (281 aa)). Residues 537–558 (NIRMKSFQQDLQVLQEAIARTS) adopt a coiled-coil conformation.

In terms of tissue distribution, expressed in liver, kidney, pancreas and at low levels in brain and heart. Expressed in embryonic brain and developing neural retina.

The protein resides in the cell projection. Its subcellular location is the neuron projection. It is found in the growth cone. In terms of biological role, plays a role in neurite development, may be through the activation of the GTPase RAC1. Plays a role in the control of eye movement and gaze stability. The chain is FERM domain-containing protein 7 (FRMD7) from Homo sapiens (Human).